Consider the following 353-residue polypeptide: Photosystem II D2 protein (353 aa).

Thr-2 bears the N-acetylthreonine mark. Thr-2 is subject to Phosphothreonine. A helical membrane pass occupies residues 41–61; it reads CAYFAVGGWFTGTTFVTSWYT. Chlorophyll a is bound at residue His-118. A helical membrane pass occupies residues 125 to 141; the sequence is GFMLRQFELARSVQLRP. Positions 130 and 143 each coordinate pheophytin a. A helical membrane pass occupies residues 153-166; it reads VFVSVFLIYPLGQS. His-198 contacts chlorophyll a. Residues 208–228 form a helical membrane-spanning segment; the sequence is AALLCAIHGATVENTLFEDGD. 2 residues coordinate a plastoquinone: His-215 and Phe-262. His-215 contributes to the Fe cation binding site. Position 269 (His-269) interacts with Fe cation. Residues 279–295 form a helical membrane-spanning segment; it reads GLWMSALGVVGLALNLR.

This sequence belongs to the reaction center PufL/M/PsbA/D family. In terms of assembly, PSII is composed of 1 copy each of membrane proteins PsbA, PsbB, PsbC, PsbD, PsbE, PsbF, PsbH, PsbI, PsbJ, PsbK, PsbL, PsbM, PsbT, PsbX, PsbY, PsbZ, Psb30/Ycf12, at least 3 peripheral proteins of the oxygen-evolving complex and a large number of cofactors. It forms dimeric complexes. The D1/D2 heterodimer binds P680, chlorophylls that are the primary electron donor of PSII, and subsequent electron acceptors. It shares a non-heme iron and each subunit binds pheophytin, quinone, additional chlorophylls, carotenoids and lipids. There is also a Cl(-1) ion associated with D1 and D2, which is required for oxygen evolution. The PSII complex binds additional chlorophylls, carotenoids and specific lipids. is required as a cofactor.

The protein localises to the plastid. The protein resides in the chloroplast thylakoid membrane. The catalysed reaction is 2 a plastoquinone + 4 hnu + 2 H2O = 2 a plastoquinol + O2. Functionally, photosystem II (PSII) is a light-driven water:plastoquinone oxidoreductase that uses light energy to abstract electrons from H(2)O, generating O(2) and a proton gradient subsequently used for ATP formation. It consists of a core antenna complex that captures photons, and an electron transfer chain that converts photonic excitation into a charge separation. The D1/D2 (PsbA/PsbD) reaction center heterodimer binds P680, the primary electron donor of PSII as well as several subsequent electron acceptors. D2 is needed for assembly of a stable PSII complex. This is Photosystem II D2 protein from Ipomoea purpurea (Common morning glory).